The chain runs to 276 residues: Bis(5'-nucleosyl)-tetraphosphatase, symmetrical (276 aa).

Belongs to the Ap4A hydrolase family.

The catalysed reaction is P(1),P(4)-bis(5'-adenosyl) tetraphosphate + H2O = 2 ADP + 2 H(+). Its function is as follows. Hydrolyzes diadenosine 5',5'''-P1,P4-tetraphosphate to yield ADP. In Legionella pneumophila subsp. pneumophila (strain Philadelphia 1 / ATCC 33152 / DSM 7513), this protein is Bis(5'-nucleosyl)-tetraphosphatase, symmetrical.